A 183-amino-acid chain; its full sequence is Capsid protein (183 aa).

The tract at residues 136–183 is disordered; sequence NAPILSTLPETTVVRRRGRSPRRRTPSPRRRRSQSPRRRRSQSRESQC. The span at 149–176 shows a compositional bias: basic residues; the sequence is VRRRGRSPRRRTPSPRRRRSQSPRRRRS. Phosphoserine; by host occurs at positions 155, 162, and 170. One copy of the 1; half-length repeat lies at 155–161; the sequence is SPRRRTP. Residues 155–177 are 3 X 8 AA repeats of S-P-R-R-R-[PR]-S-Q; it reads SPRRRTPSPRRRRSQSPRRRRSQ. The Bipartite nuclear localization signal signature appears at 158–175; sequence RRTPSPRRRRSQSPRRRR. 2 tandem repeats follow at residues 162–169 and 170–177. Residues 177–183 form an RNA binding region; it reads QSRESQC.

Belongs to the orthohepadnavirus core antigen family. Homodimerizes, then multimerizes. Interacts with cytosol exposed regions of viral L glycoprotein present in the reticulum-to-Golgi compartment. Interacts with human FLNB. Phosphorylated form interacts with host importin alpha; this interaction depends on the exposure of the NLS, which itself depends upon genome maturation and/or phosphorylation of the capsid protein. Interacts with host NUP153. In terms of processing, phosphorylated by host SRPK1, SRPK2, and maybe protein kinase C or GAPDH. Phosphorylation is critical for pregenomic RNA packaging. Protein kinase C phosphorylation is stimulated by HBx protein and may play a role in transport of the viral genome to the nucleus at the late step during the viral replication cycle.

The protein resides in the virion. Its subcellular location is the host cytoplasm. Its function is as follows. Self assembles to form an icosahedral capsid. Most capsids appear to be large particles with an icosahedral symmetry of T=4 and consist of 240 copies of capsid protein, though a fraction forms smaller T=3 particles consisting of 180 capsid proteins. Entering capsids are transported along microtubules to the nucleus. Phosphorylation of the capsid is thought to induce exposure of nuclear localization signal in the C-terminal portion of the capsid protein that allows binding to the nuclear pore complex via the importin (karyopherin-) alpha and beta. Capsids are imported in intact form through the nuclear pore into the nuclear basket, where it probably binds NUP153. Only capsids that contain the mature viral genome can release the viral DNA and capsid protein into the nucleoplasm. Immature capsids get stuck in the basket. Capsids encapsulate the pre-genomic RNA and the P protein. Pre-genomic RNA is reverse-transcribed into DNA while the capsid is still in the cytoplasm. The capsid can then either be directed to the nucleus, providing more genomes for transcription, or bud through the endoplasmic reticulum to provide new virions. This Homo sapiens (Human) protein is Capsid protein.